The following is a 292-amino-acid chain: Aquaporin-3 (292 aa).

Residues 1-24 (MGRQKELMNRCGEMLHIRYRLLRQ) are Cytoplasmic-facing. The helical transmembrane segment at 25–42 (ALAECLGTLILVMFGCGS) threads the bilayer. Residues 43–56 (VAQVVLSRGTHGGF) are Extracellular-facing. Residues 57-74 (LTINLAFGFAVTLGILVA) form a helical membrane-spanning segment. The Cytoplasmic segment spans residues 75 to 78 (GQVS). The discontinuously helical intramembrane region spans 79 to 92 (GAHLNPAVTFAMCF). The NPA 1 motif lies at 83–85 (NPA). The Cytoplasmic portion of the chain corresponds to 93 to 100 (LAREPWIK). The helical transmembrane segment at 101–121 (LPIYALAQTLGAFLGAGIVFG) threads the bilayer. Residues 122–159 (LYYDAIWAFANNELFVSGPNGTAGIFATYPSGHLDMVN) are Extracellular-facing. Residue N141 is glycosylated (N-linked (GlcNAc...) asparagine). Residues 160 to 177 (GFFDQFIGTAALIVCVLA) form a helical membrane-spanning segment. Over 178–189 (IVDPYNNPVPRG) the chain is Cytoplasmic. The helical transmembrane segment at 190-206 (LEAFTVGLVVLVIGTSM) threads the bilayer. The Extracellular portion of the chain corresponds to 207–210 (GFNS). Positions 211-224 (GYAVNPARDFGPRL) form an intramembrane region, discontinuously helical. The NPA 2 signature appears at 215 to 217 (NPA). Topologically, residues 225–242 (FTALAGWGSEVFTTGRHW) are extracellular. A helical transmembrane segment spans residues 243 to 264 (WWVPIVSPLLGSIAGVFVYQLM). The Cytoplasmic segment spans residues 265 to 292 (IGCHLEQPPPSTEEENVKLAHMKHKEQI).

It belongs to the MIP/aquaporin (TC 1.A.8) family. As to quaternary structure, homotetramer; each monomer provides an independent glycerol/water pore. Could also exist in other oligomeric states. As to expression, detected in principal cells in collecting ducts in kidney medulla (at protein level). Renal medulla and colon. Predominantly in the inner medulla. Expressed in basal layer of epidermal keratinocytes.

The protein localises to the cell membrane. It is found in the basolateral cell membrane. The enzyme catalyses glycerol(in) = glycerol(out). The catalysed reaction is H2O(in) = H2O(out). It carries out the reaction urea(in) = urea(out). It catalyses the reaction H2O2(out) = H2O2(in). Aquaglyceroporins form homotetrameric transmembrane channels, with each monomer independently mediating glycerol and water transport across the plasma membrane along their osmotic gradient. Could also be permeable to urea. Also participates in cell permeability to H2O2 and H2O2-mediated signaling. In skin, transports glycerol to the epidermis and stratum corneum, where it maintains hydration, elasticity, and supports lipid biosynthesis for barrier repair. In kidney, contributes to the reabsorption of water, helping the body maintain proper fluid balance. The polypeptide is Aquaporin-3 (Mus musculus (Mouse)).